A 61-amino-acid polypeptide reads, in one-letter code: Small ribosomal subunit protein uS14 (61 aa).

Zn(2+) is bound by residues C24, C27, C40, and C43.

It belongs to the universal ribosomal protein uS14 family. Zinc-binding uS14 subfamily. In terms of assembly, part of the 30S ribosomal subunit. Contacts proteins S3 and S10. Zn(2+) serves as cofactor.

Functionally, binds 16S rRNA, required for the assembly of 30S particles and may also be responsible for determining the conformation of the 16S rRNA at the A site. This chain is Small ribosomal subunit protein uS14, found in Bacillus anthracis (strain A0248).